The primary structure comprises 205 residues: MNFDYNKLLERASGVLSSKTKNESRLKIPEPDVIYEGKSTIIRNFIDITEMMNRDPEDVIKYLTKEFGIGAVLSGQRLIINRKVSEDEIQSKMNEYMATYVICYECKSPDTEIQKIGRTYLLVCKACGAQHPIRSNREIIENSNGIEIGKEYTVTIESTGSAGEGIARYQGYTIYVPKAKKGERVKIIIRKIKRNVAIAELADKK.

The TRAM domain occupies 145–203 (GIEIGKEYTVTIESTGSAGEGIARYQGYTIYVPKAKKGERVKIIIRKIKRNVAIAELAD).

Belongs to the eIF-2-beta/eIF-5 family. Heterotrimer composed of an alpha, a beta and a gamma chain.

EIF-2 functions in the early steps of protein synthesis by forming a ternary complex with GTP and initiator tRNA. The polypeptide is Translation initiation factor 2 subunit beta (Picrophilus torridus (strain ATCC 700027 / DSM 9790 / JCM 10055 / NBRC 100828 / KAW 2/3)).